A 210-amino-acid polypeptide reads, in one-letter code: Somatotropin (210 aa).

A signal peptide spans 1–22; sequence MGQVFLLMPVLLVSCFLSHGAA. His38 contacts Zn(2+). A disulfide bridge links Cys71 with Cys183. A Zn(2+)-binding site is contributed by Glu192. A disulfide bridge links Cys200 with Cys208.

The protein belongs to the somatotropin/prolactin family.

Its subcellular location is the secreted. In terms of biological role, growth hormone plays an important role in growth control and is involved in the regulation of several anabolic processes. Implicated as an osmoregulatory substance important for seawater adaptation. This is Somatotropin (gh) from Oncorhynchus masou (Cherry salmon).